A 309-amino-acid chain; its full sequence is Probable manganese-dependent inorganic pyrophosphatase (309 aa).

The Mn(2+) site is built by His9, Asp13, Asp15, Asp75, His97, and Asp149.

This sequence belongs to the PPase class C family. It depends on Mn(2+) as a cofactor.

It localises to the cytoplasm. It catalyses the reaction diphosphate + H2O = 2 phosphate + H(+). The chain is Probable manganese-dependent inorganic pyrophosphatase from Lactiplantibacillus plantarum (strain ATCC BAA-793 / NCIMB 8826 / WCFS1) (Lactobacillus plantarum).